The chain runs to 509 residues: MEEIQRYLQPERSQQHDFLYPLIFQEYIYAFAYDRGFSRSILSENPGYDNKSSLLIVKRLITGMYQQNHFLISPNDSNQNPFGARNKNLYFPIISEGFAFIVEIPFSLRLISCLEGKKIVKSQNLRSIHSIFPFLEDNFSHLNFVLDILIPQPVHVEILVQTLHYWVKDASSLHLLRFFLNEYCNWNSLITPNKASSSFSKRNQRLFLFLYNSHVYEYESIFVFLRNQSSHLRSTSSGVLLERIFFYGKIERLVNVFVKVKDFQANLWLVKEPCMHYIRYQRKSILASKGTALFMNKWKCYLVTFWQWHFSLWFHPRRISINQLSNHSLEFLGYLSSVRMNASVVRSQIIENSFLINNAIKKFDTFVPIIPLIASLAKAKFCNVLGHPISKPVRADLSDSNIIDRFGRICRNLSHYHSGSSKKKSLYRIKYILRLSCARTLARKHKSTVRAFLKRLGSELLEEFLMSEEDVLFLTFPKASSTLRGVYRSRIWYLDIISINDLANHKSKF.

Belongs to the intron maturase 2 family. MatK subfamily.

Its subcellular location is the plastid. The protein localises to the chloroplast. In terms of biological role, usually encoded in the trnK tRNA gene intron. Probably assists in splicing its own and other chloroplast group II introns. The chain is Maturase K from Jacaranda mimosifolia (Jacaranda).